The following is a 933-amino-acid chain: Anoctamin-7 (933 aa).

At 1 to 355 the chain is on the cytoplasmic side; the sequence is MRMAATAWAG…YFAWLGFYTG (355 aa). Positions 43 to 101 are disordered; the sequence is ETSSGSHCARSRMLRRRAQEEDSTVLIDVSPPEAEKRGSYGSTAHASEPGGQQAAACRA. A helical transmembrane segment spans residues 356-376; the sequence is WLLPAAVVGTLVFLVGCFLVF. Residues 377–420 are Extracellular-facing; that stretch reads SDIPTQELCGSKDSFEMCPLCLDCPFWLLSSACALAQAGRLFDH. Residues 421–441 traverse the membrane as a helical segment; sequence GGTVFFSLFMALWAVLLLEYW. Residues 442 to 499 lie on the Cytoplasmic side of the membrane; sequence KRKSATLAYRWDCSDYEDTEERPRPQFAASAPMTAPNPITGEDEPYFPERSRARRMLA. The helical transmembrane segment at 500–520 threads the bilayer; the sequence is GSVVIVVMVAVVVMCLVSIIL. Residues 521–550 are Extracellular-facing; the sequence is YRAIMAIVVSRSGNTLLAAWASRIASLTGS. Residues 551-571 traverse the membrane as a helical segment; the sequence is VVNLVFILILSKIYVSLAHVL. At 572 to 588 the chain is on the cytoplasmic side; the sequence is TRWEMHRTQTKFEDAFT. Residues 589–609 form a helical membrane-spanning segment; sequence LKVFIFQFVNFYSSPVYIAFF. The Extracellular segment spans residues 610–714; sequence KGRFVGYPGN…FDEYLEMVLQ (105 aa). Residues 715 to 735 form a helical membrane-spanning segment; the sequence is FGFVTIFVAACPLAPLFALLN. At 736 to 763 the chain is on the cytoplasmic side; sequence NWVEIRLDARKFVCEYRRPVAERAQDIG. A helical transmembrane segment spans residues 764 to 784; sequence IWFHILAGLTHLAVISNAFLL. Topologically, residues 785 to 843 are extracellular; that stretch reads AFSSDFLPRAYYRWTRAHDLRGFLNFTLARAPSSFAAAHNRTCRYRAFRDDDGHYSQTY. N-linked (GlcNAc...) asparagine glycosylation is found at Asn-809 and Asn-824. Residues 844 to 864 form a helical membrane-spanning segment; the sequence is WNLLAIRLAFVIVFEHVVFSV. Residues 865–933 lie on the Cytoplasmic side of the membrane; sequence GRLLDLLVPD…TVPKASQLQQ (69 aa). Residues 902–933 form a disordered region; it reads GTNGTKDEQPEGSELSSHWTPFTVPKASQLQQ. Polar residues predominate over residues 915–933; sequence ELSSHWTPFTVPKASQLQQ.

This sequence belongs to the anoctamin family. In terms of tissue distribution, specifically expressed in epithelial cells of the prostate (at protein level).

The protein resides in the cell membrane. The protein localises to the cell junction. It localises to the endoplasmic reticulum. It is found in the cytoplasm. Its subcellular location is the cytosol. The enzyme catalyses a 1,2-diacyl-sn-glycero-3-phospho-L-serine(in) = a 1,2-diacyl-sn-glycero-3-phospho-L-serine(out). The catalysed reaction is a beta-D-galactosyl-(1&lt;-&gt;1')-N-acylsphing-4-enine(out) = a beta-D-galactosyl-(1&lt;-&gt;1')-N-acylsphing-4-enine(in). It carries out the reaction a 1,2-diacyl-sn-glycero-3-phosphocholine(in) = a 1,2-diacyl-sn-glycero-3-phosphocholine(out). Has calcium-dependent phospholipid scramblase activity; scrambles phosphatidylserine, phosphatidylcholine and galactosylceramide. Does not exhibit calcium-activated chloride channel (CaCC) activity. May play a role in cell-cell interactions. In Homo sapiens (Human), this protein is Anoctamin-7 (ANO7).